A 236-amino-acid polypeptide reads, in one-letter code: 2-C-methyl-D-erythritol 4-phosphate cytidylyltransferase (236 aa).

Belongs to the IspD/TarI cytidylyltransferase family. IspD subfamily. In terms of assembly, homodimer.

The catalysed reaction is 2-C-methyl-D-erythritol 4-phosphate + CTP + H(+) = 4-CDP-2-C-methyl-D-erythritol + diphosphate. The protein operates within isoprenoid biosynthesis; isopentenyl diphosphate biosynthesis via DXP pathway; isopentenyl diphosphate from 1-deoxy-D-xylulose 5-phosphate: step 2/6. In terms of biological role, catalyzes the formation of 4-diphosphocytidyl-2-C-methyl-D-erythritol from CTP and 2-C-methyl-D-erythritol 4-phosphate (MEP). The sequence is that of 2-C-methyl-D-erythritol 4-phosphate cytidylyltransferase from Escherichia coli O45:K1 (strain S88 / ExPEC).